The chain runs to 295 residues: uncharacterized protein (295 aa).

It is found in the plastid. Its subcellular location is the chloroplast. This is an uncharacterized protein from Euglena gracilis.